Consider the following 379-residue polypeptide: ATPase ASNA1 homolog (379 aa).

Positions 1–20 are disordered; it reads MSEDESNSVSCSLSLESDGY. Over residues 7-18 the composition is skewed to low complexity; sequence NSVSCSLSLESD. Residue 46-53 participates in ATP binding; it reads KGGVGKTT. Residue D75 is part of the active site. The ATP site is built by E246 and N273.

It belongs to the arsA ATPase family. As to quaternary structure, homodimer.

It localises to the cytoplasm. Its subcellular location is the endoplasmic reticulum. Functionally, ATPase required for the post-translational delivery of tail-anchored (TA) proteins to the endoplasmic reticulum. Recognizes and selectively binds the transmembrane domain of TA proteins in the cytosol. This complex then targets to the endoplasmic reticulum by membrane-bound receptors, where the tail-anchored protein is released for insertion. This process is regulated by ATP binding and hydrolysis. ATP binding drives the homodimer towards the closed dimer state, facilitating recognition of newly synthesized TA membrane proteins. ATP hydrolysis is required for insertion. Subsequently, the homodimer reverts towards the open dimer state, lowering its affinity for the membrane-bound receptor, and returning it to the cytosol to initiate a new round of targeting. The sequence is that of ATPase ASNA1 homolog from Plasmodium falciparum (isolate 3D7).